The chain runs to 229 residues: Non-structural protein P8 (229 aa).

The next 2 membrane-spanning stretches (helical) occupy residues 119-139 (IIHMTLLIAAVVALLTSVCTL) and 162-182 (SLNPMLGVVNLGATFLMMVCA).

This sequence belongs to the orbivirus NS3 family. Forms homooligomers via coiled-coil motif. Interacts with host OPTN; this interaction inhibits innate immune response.

The protein localises to the host cell membrane. It is found in the host Golgi apparatus. Functionally, plays a role in the inhibition of host innate immune response. Interacts with host OPTN and thus inhibits the recruitment of TBK1 to the host Golgi apparatus. In turn, downstream partner IRF3 cannot be activated and IFN-beta production is impaired. Its function is as follows. Facilitates viral particle release either by increasing plasma membrane permeability through a viroporin-like activity or by viral budding. The protein is Non-structural protein P8 (Segment-10) of Antilocapra americana (Pronghorn).